We begin with the raw amino-acid sequence, 628 residues long: tRNA uridine 5-carboxymethylaminomethyl modification enzyme MnmG (628 aa).

Gly-13 to Gly-18 contributes to the FAD binding site. Gly-273–Phe-287 lines the NAD(+) pocket.

This sequence belongs to the MnmG family. Homodimer. Heterotetramer of two MnmE and two MnmG subunits. Requires FAD as cofactor.

Its subcellular location is the cytoplasm. Functionally, NAD-binding protein involved in the addition of a carboxymethylaminomethyl (cmnm) group at the wobble position (U34) of certain tRNAs, forming tRNA-cmnm(5)s(2)U34. This is tRNA uridine 5-carboxymethylaminomethyl modification enzyme MnmG from Buchnera aphidicola subsp. Acyrthosiphon pisum (strain APS) (Acyrthosiphon pisum symbiotic bacterium).